A 417-amino-acid polypeptide reads, in one-letter code: Type IV inositol polyphosphate 5-phosphatase 9 (417 aa).

Catalytic regions lie at residues 258 to 273 and 339 to 354; these read DRVIFLGDLNYRISLP and KKRAPAWCDRIIWYGN.

The protein belongs to the inositol polyphosphate 5-phosphatase family. Specifically expressed in roots.

It catalyses the reaction a 1,2-diacyl-sn-glycero-3-phospho-(1D-myo-inositol-4,5-bisphosphate) + H2O = a 1,2-diacyl-sn-glycero-3-phospho-(1D-myo-inositol 4-phosphate) + phosphate. The enzyme catalyses a 1,2-diacyl-sn-glycero-3-phospho-(1D-myo-inositol-3,4,5-trisphosphate) + H2O = a 1,2-diacyl-sn-glycero-3-phospho-(1D-myo-inositol-3,4-bisphosphate) + phosphate. Its function is as follows. Has phosphatase activity toward PtdIns(4,5)P2 and at a lower extent toward PtdIns(3,4,5)P3 but not toward Ins(1,4,5)P3. Functions in salt stress response by regulating reactive oxygen species (ROS) production, endocytosis, Ca(2+) influx and stress-responsive genes expression. This is Type IV inositol polyphosphate 5-phosphatase 9 from Arabidopsis thaliana (Mouse-ear cress).